The chain runs to 370 residues: MKFIDEARIEVIAGDGGDGSASMRREKFVPFGGPDGGDGGRGGSVYAIADRNINTLIDYRYAKKHLARNGENGRGSDCYGKGGDDVTLRMPVGTIISDMDTGELIADLTEHDQQVMLAQGGSGGLGNLHFKSSTNRAPRQKTDGKPGERRMLRLELKVLADVGLLGMPNAGKSTFISSVSNARPKIADYPFTTLAPNLGVVRVGPSKSFVIADIPGLIEGAAEGAGLGHQFLRHLQRTGVLLHLVDLAPFDESVDPVAEATAIVGELRKYDEALYEKPRWLVLNKLDMVPEDERKARVADFLERFEWDGPVFEISALTGQGCEALCYAIYDYLAEHSDAHRAAEAEDLAADVRFRDEPPAKGGAAPGDDA.

The 159-residue stretch at 1-159 (MKFIDEARIE…RMLRLELKVL (159 aa)) folds into the Obg domain. The interval 127–146 (NLHFKSSTNRAPRQKTDGKP) is disordered. The region spanning 160 to 334 (ADVGLLGMPN…LCYAIYDYLA (175 aa)) is the OBG-type G domain. GTP-binding positions include 166–173 (GMPNAGKS), 191–195 (FTTLA), 213–216 (DIPG), 284–287 (NKLD), and 315–317 (SAL). 2 residues coordinate Mg(2+): serine 173 and threonine 193.

Belongs to the TRAFAC class OBG-HflX-like GTPase superfamily. OBG GTPase family. As to quaternary structure, monomer. Requires Mg(2+) as cofactor.

It is found in the cytoplasm. Functionally, an essential GTPase which binds GTP, GDP and possibly (p)ppGpp with moderate affinity, with high nucleotide exchange rates and a fairly low GTP hydrolysis rate. Plays a role in control of the cell cycle, stress response, ribosome biogenesis and in those bacteria that undergo differentiation, in morphogenesis control. This is GTPase Obg from Burkholderia lata (strain ATCC 17760 / DSM 23089 / LMG 22485 / NCIMB 9086 / R18194 / 383).